Consider the following 157-residue polypeptide: Dihydrofolate reductase type 6 (157 aa).

The DHFR domain occupies Lys-2 to Lys-156.

The protein belongs to the dihydrofolate reductase family. As to quaternary structure, homodimer.

The enzyme catalyses (6S)-5,6,7,8-tetrahydrofolate + NADP(+) = 7,8-dihydrofolate + NADPH + H(+). It functions in the pathway cofactor biosynthesis; tetrahydrofolate biosynthesis; 5,6,7,8-tetrahydrofolate from 7,8-dihydrofolate: step 1/1. Its function is as follows. Key enzyme in folate metabolism. Catalyzes an essential reaction for de novo glycine and purine synthesis, and for DNA precursor synthesis. The sequence is that of Dihydrofolate reductase type 6 (dhfrVI) from Proteus mirabilis.